The sequence spans 515 residues: Glucose-6-phosphate 1-dehydrogenase (515 aa).

Residue alanine 2 is modified to N-acetylalanine. A Phosphoserine modification is found at serine 8. Threonine 10 bears the Phosphothreonine mark. NADP(+) contacts are provided by residues 38-45 (GASGDLAK) and arginine 72. Lysine 89 is subject to N6-acetyllysine. Residues tyrosine 147 and lysine 171 each contribute to the NADP(+) site. D-glucose 6-phosphate-binding positions include lysine 171, 201-205 (HYLGK), glutamate 239, and aspartate 258. Lysine 171 is modified (N6-(2-hydroxyisobutyryl)lysine; alternate). Lysine 171 carries the N6-acetyllysine; alternate modification. The Proton acceptor role is filled by histidine 263. Arginine 357 serves as a coordination point for NADP(+). 2 residues coordinate D-glucose 6-phosphate: lysine 360 and arginine 365. Residues lysine 366, arginine 370, and arginine 393 each coordinate NADP(+). Glutamine 395 serves as a coordination point for D-glucose 6-phosphate. NADP(+)-binding positions include 401–403 (YTK) and 421–423 (DLT). Lysine 403 is subject to N6-acetyllysine. Lysine 432 carries the post-translational modification N6-acetyllysine. Arginine 487 lines the NADP(+) pocket. N6-acetyllysine is present on lysine 497. The NADP(+) site is built by tyrosine 503 and tryptophan 509. Tyrosine 503 is modified (phosphotyrosine).

The protein belongs to the glucose-6-phosphate dehydrogenase family. In terms of assembly, homotetramer; dimer of dimers. Interacts with SIRT2; the interaction is enhanced by H(2)O(2) treatment. Forms a ternary complex with ALDOB and TP53; this interaction is direct. ALDOB stabilizes the complex inhibiting G6PD activity and keeping oxidative pentose phosphate metabolism in check. Acetylated by ELP3 at Lys-403; acetylation inhibits its homodimerization and enzyme activity. Deacetylated by SIRT2 at Lys-403; deacetylation stimulates its enzyme activity.

Its subcellular location is the cytoplasm. It is found in the cytosol. It localises to the membrane. It carries out the reaction D-glucose 6-phosphate + NADP(+) = 6-phospho-D-glucono-1,5-lactone + NADPH + H(+). It functions in the pathway carbohydrate degradation; pentose phosphate pathway; D-ribulose 5-phosphate from D-glucose 6-phosphate (oxidative stage): step 1/3. Cytosolic glucose-6-phosphate dehydrogenase that catalyzes the first and rate-limiting step of the oxidative branch within the pentose phosphate pathway/shunt, an alternative route to glycolysis for the dissimilation of carbohydrates and a major source of reducing power and metabolic intermediates for fatty acid and nucleic acid biosynthetic processes. The polypeptide is Glucose-6-phosphate 1-dehydrogenase (G6PD) (Osphranter robustus (Wallaroo)).